We begin with the raw amino-acid sequence, 382 residues long: Alanine racemase (382 aa).

The Proton acceptor; specific for D-alanine role is filled by Lys-39. The residue at position 39 (Lys-39) is an N6-(pyridoxal phosphate)lysine. Arg-138 is a binding site for substrate. The active-site Proton acceptor; specific for L-alanine is the Tyr-265. Met-312 contributes to the substrate binding site.

It belongs to the alanine racemase family. It depends on pyridoxal 5'-phosphate as a cofactor.

It catalyses the reaction L-alanine = D-alanine. The protein operates within amino-acid biosynthesis; D-alanine biosynthesis; D-alanine from L-alanine: step 1/1. In terms of biological role, catalyzes the interconversion of L-alanine and D-alanine. May also act on other amino acids. This is Alanine racemase (alr) from Staphylococcus epidermidis (strain ATCC 35984 / DSM 28319 / BCRC 17069 / CCUG 31568 / BM 3577 / RP62A).